The primary structure comprises 1112 residues: DNA-directed RNA polymerase subunit beta (1112 aa).

The tract at residues 1087-1112 (VGGRRTPNRPTYENIGGPREMEFSED) is disordered.

It belongs to the RNA polymerase beta chain family. In cyanobacteria the RNAP catalytic core is composed of 2 alpha, 1 beta, 1 beta', 1 gamma and 1 omega subunit. When a sigma factor is associated with the core the holoenzyme is formed, which can initiate transcription.

The catalysed reaction is RNA(n) + a ribonucleoside 5'-triphosphate = RNA(n+1) + diphosphate. DNA-dependent RNA polymerase catalyzes the transcription of DNA into RNA using the four ribonucleoside triphosphates as substrates. The sequence is that of DNA-directed RNA polymerase subunit beta from Gloeobacter violaceus (strain ATCC 29082 / PCC 7421).